The sequence spans 228 residues: UPF0173 metal-dependent hydrolase lwe1590 (228 aa).

The protein belongs to the UPF0173 family.

The chain is UPF0173 metal-dependent hydrolase lwe1590 from Listeria welshimeri serovar 6b (strain ATCC 35897 / DSM 20650 / CCUG 15529 / CIP 8149 / NCTC 11857 / SLCC 5334 / V8).